The following is a 470-amino-acid chain: Nuclear receptor subfamily 0 group B member 1 (470 aa).

3 consecutive repeat copies span residues 1-67, 68-133, and 134-200. The segment at 1 to 253 is 4 X 67 AA tandem repeats; sequence MAGENHQWQG…RPVALKNPQV (253 aa). 3 consecutive short sequence motifs (LXXLL motif) follow at residues 13-17, 80-84, and 146-150; these read LYNML, LYSML, and LYSLL. A 4; truncated repeat occupies 201-253; that stretch reads FCGEDHPQQGSTLYCMPTSTNQAQAAPEERPRAPWWDASSGALRPVALKNPQV. In terms of domain architecture, NR LBD spans 215-469; it reads CMPTSTNQAQ…DMMLEMLCTK (255 aa). The AF-2 motif signature appears at 461-466; the sequence is MMLEML.

The protein belongs to the nuclear hormone receptor family. NR0 subfamily. In terms of assembly, homodimer. Interacts with NR5A1, NR5A2, NR0B2 and with COPS2. Interacts with ESRRB; represses ESRRB activity at the GATA6 promoter.

The protein localises to the nucleus. It is found in the cytoplasm. Nuclear receptor that lacks a DNA-binding domain and acts as a corepressor that inhibits the transcriptional activity of other nuclear receptors through heterodimeric interactions. Component of a cascade required for the development of the hypothalamic-pituitary-adrenal-gonadal axis. May also have a role in the development of the embryo and in the maintenance of embryonic stem cell pluripotency. The protein is Nuclear receptor subfamily 0 group B member 1 (NR0B1) of Pongo pygmaeus (Bornean orangutan).